The sequence spans 530 residues: Phosphoenolpyruvate carboxykinase (ATP) (530 aa).

Substrate is bound by residues arginine 59, tyrosine 198, and lysine 204. Residues lysine 204, histidine 223, and 239–247 each bind ATP; that span reads GLSGTGKTT. Residues lysine 204 and histidine 223 each coordinate Mn(2+). Mn(2+) is bound at residue aspartate 260. ATP-binding positions include glutamate 288, arginine 325, 440 to 441, and threonine 446; that span reads RI. Residue arginine 325 coordinates substrate.

This sequence belongs to the phosphoenolpyruvate carboxykinase (ATP) family. The cofactor is Mn(2+).

The protein resides in the cytoplasm. It catalyses the reaction oxaloacetate + ATP = phosphoenolpyruvate + ADP + CO2. The protein operates within carbohydrate biosynthesis; gluconeogenesis. Its function is as follows. Involved in the gluconeogenesis. Catalyzes the conversion of oxaloacetate (OAA) to phosphoenolpyruvate (PEP) through direct phosphoryl transfer between the nucleoside triphosphate and OAA. This Azobacteroides pseudotrichonymphae genomovar. CFP2 protein is Phosphoenolpyruvate carboxykinase (ATP).